Reading from the N-terminus, the 156-residue chain is Ribosomal RNA large subunit methyltransferase H (156 aa).

Residues leucine 72, glycine 104, and 123 to 128 (LSKMTL) each bind S-adenosyl-L-methionine.

The protein belongs to the RNA methyltransferase RlmH family. In terms of assembly, homodimer.

Its subcellular location is the cytoplasm. It catalyses the reaction pseudouridine(1915) in 23S rRNA + S-adenosyl-L-methionine = N(3)-methylpseudouridine(1915) in 23S rRNA + S-adenosyl-L-homocysteine + H(+). In terms of biological role, specifically methylates the pseudouridine at position 1915 (m3Psi1915) in 23S rRNA. The polypeptide is Ribosomal RNA large subunit methyltransferase H (Maridesulfovibrio salexigens (strain ATCC 14822 / DSM 2638 / NCIMB 8403 / VKM B-1763) (Desulfovibrio salexigens)).